The primary structure comprises 112 residues: uncharacterized protein (112 aa).

This is an uncharacterized protein from Caenorhabditis elegans.